A 77-amino-acid chain; its full sequence is Major outer membrane lipoprotein Lpp (77 aa).

A signal peptide spans 1–19; it reads MNRTKLVLGAVILGSHSAG. The N-palmitoyl cysteine moiety is linked to residue cysteine 20. The S-diacylglycerol cysteine moiety is linked to residue cysteine 20. 2 repeats span residues 23-33 and 37-47; these read NAKIDQLSSDV and NAKVDQLSNDV. Positions 26–74 form a coiled coil; the sequence is IDQLSSDVQTLNAKVDQLSNDVNAMRSDVQAAKDDAARANQRLDNQAHA. Residues 56-77 form a disordered region; sequence AAKDDAARANQRLDNQAHAYKK. N6-murein peptidoglycan lysine is present on lysine 77.

It belongs to the Lpp family. In terms of assembly, homotrimer.

The protein localises to the cell outer membrane. The protein resides in the secreted. Its subcellular location is the cell wall. A highly abundant outer membrane lipoprotein that controls the distance between the inner and outer membranes. The only protein known to be covalently linked to the peptidoglycan network (PGN). Also non-covalently binds the PGN. The link between the cell outer membrane and PGN contributes to maintenance of the structural and functional integrity of the cell envelope, and maintains the correct distance between the PGN and the outer membrane. The protein is Major outer membrane lipoprotein Lpp of Serratia marcescens.